Here is a 585-residue protein sequence, read N- to C-terminus: Glutamate decarboxylase 2 (585 aa).

Positions 1–24 (MASPGSGFWSFGSEDGSGDPENSG) are disordered. A phosphoserine mark is found at Ser-3, Ser-6, Ser-10, and Ser-13. S-palmitoyl cysteine attachment occurs at residues Cys-30 and Cys-45. Residue 181 to 183 (QLS) coordinates substrate. Lys-396 is subject to N6-(pyridoxal phosphate)lysine. Arg-558 contributes to the substrate binding site.

This sequence belongs to the group II decarboxylase family. Homodimer. The cofactor is pyridoxal 5'-phosphate. Phosphorylated; which does not affect kinetic parameters or subcellular location. In terms of processing, palmitoylated; which is required for presynaptic clustering.

The protein localises to the cytoplasm. It is found in the cytosol. It localises to the cytoplasmic vesicle. Its subcellular location is the presynaptic cell membrane. The protein resides in the golgi apparatus membrane. The enzyme catalyses L-glutamate + H(+) = 4-aminobutanoate + CO2. In terms of biological role, catalyzes the production of GABA. This is Glutamate decarboxylase 2 (GAD2) from Sus scrofa (Pig).